Here is a 275-residue protein sequence, read N- to C-terminus: tRNA pseudouridine synthase A (275 aa).

Aspartate 55 serves as the catalytic Nucleophile. Tyrosine 111 lines the substrate pocket.

It belongs to the tRNA pseudouridine synthase TruA family.

It catalyses the reaction uridine(38/39/40) in tRNA = pseudouridine(38/39/40) in tRNA. In terms of biological role, formation of pseudouridine at positions 38, 39 and 40 in the anticodon stem and loop of transfer RNAs. The chain is tRNA pseudouridine synthase A from Methanococcoides burtonii (strain DSM 6242 / NBRC 107633 / OCM 468 / ACE-M).